Consider the following 241-residue polypeptide: Transforming protein p29 (241 aa).

Positions 1–41 (MPAARAAPAADEPMRDPVAPVRAPALPRPAPGAVAPASGGA) are disordered. Residues Cys-233 and Cys-236 are each lipidated (S-palmitoyl cysteine; by host). Residue Cys-238 is modified to Cysteine methyl ester; by host. A lipid anchor (S-farnesyl cysteine; by host) is attached at Cys-238. Residues 239-241 (VLS) constitute a propeptide, removed in mature form.

This sequence belongs to the small GTPase superfamily. Ras family.

The protein resides in the host cell membrane. It catalyses the reaction GTP + H2O = GDP + phosphate + H(+). With respect to regulation, alternates between an inactive form bound to GDP and an active form bound to GTP. Activated by a guanine nucleotide-exchange factor (GEF) and inactivated by a GTPase-activating protein (GAP). The chain is Transforming protein p29 (H-RAS) from Mus musculus (Mouse).